Consider the following 202-residue polypeptide: Segregation and condensation protein B (202 aa).

Belongs to the ScpB family. Homodimer. Homodimerization may be required to stabilize the binding of ScpA to the Smc head domains. Component of a cohesin-like complex composed of ScpA, ScpB and the Smc homodimer, in which ScpA and ScpB bind to the head domain of Smc. The presence of the three proteins is required for the association of the complex with DNA.

It is found in the cytoplasm. Its function is as follows. Participates in chromosomal partition during cell division. May act via the formation of a condensin-like complex containing Smc and ScpA that pull DNA away from mid-cell into both cell halves. The polypeptide is Segregation and condensation protein B (Clostridium acetobutylicum (strain ATCC 824 / DSM 792 / JCM 1419 / IAM 19013 / LMG 5710 / NBRC 13948 / NRRL B-527 / VKM B-1787 / 2291 / W)).